The sequence spans 521 residues: Protein DETOXIFICATION 44, chloroplastic (521 aa).

The N-terminal 31 residues, 1 to 31, are a transit peptide targeting the chloroplast; the sequence is MAAVATSFCFSPHRSPSRFGNPNSSIRRTIV. A disordered region spans residues 12-73; sequence PHRSPSRFGN…DHDHKPDPGI (62 aa). 2 stretches are compositionally biased toward polar residues: residues 18–27 and 42–61; these read RFGNPNSSIR and AVST…TSQN. Transmembrane regions (helical) follow at residues 80 to 100, 103 to 123, 167 to 187, 213 to 235, 242 to 262, 268 to 288, 314 to 334, 345 to 365, 385 to 405, 423 to 443, 454 to 474, and 481 to 503; these read IMSI…TSLV, AFVG…VSVF, VSTS…ALSL, RLRA…FRGF, LYAV…LIFV, SGAA…LLWK, LLIG…SLAA, QIVL…AIAA, LFGV…VLFI, IALS…LAFV, FGFA…FMLV, and LAGI…AWRL.

The protein belongs to the multi antimicrobial extrusion (MATE) (TC 2.A.66.1) family. As to expression, expressed in shoots.

It is found in the plastid. It localises to the chloroplast membrane. The chain is Protein DETOXIFICATION 44, chloroplastic from Arabidopsis thaliana (Mouse-ear cress).